A 276-amino-acid polypeptide reads, in one-letter code: Formamidopyrimidine-DNA glycosylase (276 aa).

Pro2 acts as the Schiff-base intermediate with DNA in catalysis. The active-site Proton donor is Glu3. Lys60 serves as the catalytic Proton donor; for beta-elimination activity. Residues His93, Arg112, and Arg155 each contribute to the DNA site. An FPG-type zinc finger spans residues 240-274; the sequence is LVYGRKDEACTKCGAEIIRFVVGGRGTHICPDCQK. The active-site Proton donor; for delta-elimination activity is Arg264.

This sequence belongs to the FPG family. As to quaternary structure, monomer. The cofactor is Zn(2+).

The enzyme catalyses Hydrolysis of DNA containing ring-opened 7-methylguanine residues, releasing 2,6-diamino-4-hydroxy-5-(N-methyl)formamidopyrimidine.. It carries out the reaction 2'-deoxyribonucleotide-(2'-deoxyribose 5'-phosphate)-2'-deoxyribonucleotide-DNA = a 3'-end 2'-deoxyribonucleotide-(2,3-dehydro-2,3-deoxyribose 5'-phosphate)-DNA + a 5'-end 5'-phospho-2'-deoxyribonucleoside-DNA + H(+). Its function is as follows. Involved in base excision repair of DNA damaged by oxidation or by mutagenic agents. Acts as a DNA glycosylase that recognizes and removes damaged bases. Has a preference for oxidized purines, such as 7,8-dihydro-8-oxoguanine (8-oxoG). Has AP (apurinic/apyrimidinic) lyase activity and introduces nicks in the DNA strand. Cleaves the DNA backbone by beta-delta elimination to generate a single-strand break at the site of the removed base with both 3'- and 5'-phosphates. The chain is Formamidopyrimidine-DNA glycosylase from Brevibacillus brevis (strain 47 / JCM 6285 / NBRC 100599).